Reading from the N-terminus, the 131-residue chain is DNA-directed RNA polymerases I, II, and III subunit RPABC2 (131 aa).

The segment at 1–24 (MDDADYDNDDVGGDDFDDVDEDVD) is disordered.

The protein belongs to the archaeal Rpo6/eukaryotic RPB6 RNA polymerase subunit family. Component of the RNA polymerase I (Pol I), RNA polymerase II (Pol II) and RNA polymerase III (Pol III) complexes consisting of at least 13, 12 and 17 subunits, respectively.

The protein resides in the nucleus. Its function is as follows. DNA-dependent RNA polymerases catalyze the transcription of DNA into RNA using the four ribonucleoside triphosphates as substrates. Common component of RNA polymerases I, II and III which synthesize ribosomal RNA precursors, mRNA precursors and many functional non-coding RNAs, and small RNAs, such as 5S rRNA and tRNAs, respectively. Pol II is the central component of the basal RNA polymerase II transcription machinery. Pols are composed of mobile elements that move relative to each other. In Pol II, Polr2F/RPB6 is part of the clamp element and together with parts of Polr2A/RPB1 and RPB2 forms a pocket to which the Polr2D/RPB4-Polr2G/RPB7 subcomplex binds. The polypeptide is DNA-directed RNA polymerases I, II, and III subunit RPABC2 (Drosophila melanogaster (Fruit fly)).